A 350-amino-acid polypeptide reads, in one-letter code: FAD:protein FMN transferase (350 aa).

The N-terminal stretch at 1-19 is a signal peptide; that stretch reads MDMTFFRAALLGACVLLSG. C20 carries the N-palmitoyl cysteine lipid modification. A lipid anchor (S-diacylglycerol cysteine) is attached at C20. FAD-binding positions include M41, W78, 119–121, and D181; that span reads AMD. T184 contributes to the Mg(2+) binding site. The FAD site is built by E187 and I272. D298, D301, and T302 together coordinate Mg(2+).

This sequence belongs to the ApbE family. It depends on Mg(2+) as a cofactor.

It is found in the cell inner membrane. The enzyme catalyses L-threonyl-[protein] + FAD = FMN-L-threonyl-[protein] + AMP + H(+). Its function is as follows. Flavin transferase that catalyzes the transfer of the FMN moiety of FAD and its covalent binding to the hydroxyl group of a threonine residue in a target flavoprotein such as NqrB and NqrC, two subunits of the NQR complex. The sequence is that of FAD:protein FMN transferase from Klebsiella pneumoniae (strain 342).